The sequence spans 186 residues: GTP cyclohydrolase 1 (186 aa).

Positions 78, 81, and 150 each coordinate Zn(2+).

The protein belongs to the GTP cyclohydrolase I family. In terms of assembly, toroid-shaped homodecamer, composed of two pentamers of five dimers.

It carries out the reaction GTP + H2O = 7,8-dihydroneopterin 3'-triphosphate + formate + H(+). It participates in cofactor biosynthesis; 7,8-dihydroneopterin triphosphate biosynthesis; 7,8-dihydroneopterin triphosphate from GTP: step 1/1. The sequence is that of GTP cyclohydrolase 1 from Enterococcus faecalis (strain ATCC 700802 / V583).